A 354-amino-acid chain; its full sequence is Threonine synthase (354 aa).

Position 61 is an N6-(pyridoxal phosphate)lysine (Lys-61). Residues Asn-87, 187 to 191 (GNAGN), and Thr-316 each bind pyridoxal 5'-phosphate.

The protein belongs to the threonine synthase family. Pyridoxal 5'-phosphate is required as a cofactor.

It carries out the reaction O-phospho-L-homoserine + H2O = L-threonine + phosphate. It participates in amino-acid biosynthesis; L-threonine biosynthesis; L-threonine from L-aspartate: step 5/5. In terms of biological role, catalyzes the gamma-elimination of phosphate from L-phosphohomoserine and the beta-addition of water to produce L-threonine. This chain is Threonine synthase (thrC), found in Halalkalibacterium halodurans (strain ATCC BAA-125 / DSM 18197 / FERM 7344 / JCM 9153 / C-125) (Bacillus halodurans).